The primary structure comprises 214 residues: Adenylate kinase (214 aa).

10 to 15 (GSGKGT) contacts ATP. Residues 30–59 (STGDMLRAAVREGTPLGMEAKKIMDAGQLV) form an NMP region. Residues Thr-31, Arg-36, 57-59 (QLV), 85-88 (GFPR), and Gln-92 contribute to the AMP site. An LID region spans residues 122 to 159 (GRRVHPASGRTYHVVFNPPKVEGRDDETGEPLVQREDD). ATP contacts are provided by residues Arg-123 and 132 to 133 (TY). Residues Arg-156 and Arg-167 each contribute to the AMP site. Residue Gly-200 coordinates ATP.

Belongs to the adenylate kinase family. In terms of assembly, monomer.

The protein localises to the cytoplasm. The catalysed reaction is AMP + ATP = 2 ADP. Its pathway is purine metabolism; AMP biosynthesis via salvage pathway; AMP from ADP: step 1/1. In terms of biological role, catalyzes the reversible transfer of the terminal phosphate group between ATP and AMP. Plays an important role in cellular energy homeostasis and in adenine nucleotide metabolism. This chain is Adenylate kinase, found in Methylococcus capsulatus (strain ATCC 33009 / NCIMB 11132 / Bath).